Consider the following 209-residue polypeptide: Imidazole glycerol phosphate synthase subunit HisH (209 aa).

The Glutamine amidotransferase type-1 domain maps to P4 to L209. The active-site Nucleophile is C82. Active-site residues include H190 and E192.

As to quaternary structure, heterodimer of HisH and HisF.

The protein resides in the cytoplasm. The enzyme catalyses 5-[(5-phospho-1-deoxy-D-ribulos-1-ylimino)methylamino]-1-(5-phospho-beta-D-ribosyl)imidazole-4-carboxamide + L-glutamine = D-erythro-1-(imidazol-4-yl)glycerol 3-phosphate + 5-amino-1-(5-phospho-beta-D-ribosyl)imidazole-4-carboxamide + L-glutamate + H(+). It carries out the reaction L-glutamine + H2O = L-glutamate + NH4(+). It functions in the pathway amino-acid biosynthesis; L-histidine biosynthesis; L-histidine from 5-phospho-alpha-D-ribose 1-diphosphate: step 5/9. In terms of biological role, IGPS catalyzes the conversion of PRFAR and glutamine to IGP, AICAR and glutamate. The HisH subunit catalyzes the hydrolysis of glutamine to glutamate and ammonia as part of the synthesis of IGP and AICAR. The resulting ammonia molecule is channeled to the active site of HisF. In Leifsonia xyli subsp. xyli (strain CTCB07), this protein is Imidazole glycerol phosphate synthase subunit HisH.